The following is a 290-amino-acid chain: Bifunctional protein FolD (290 aa).

NADP(+)-binding positions include 167–169 (GRS), Ser-192, and Ile-233.

It belongs to the tetrahydrofolate dehydrogenase/cyclohydrolase family. As to quaternary structure, homodimer.

It catalyses the reaction (6R)-5,10-methylene-5,6,7,8-tetrahydrofolate + NADP(+) = (6R)-5,10-methenyltetrahydrofolate + NADPH. It carries out the reaction (6R)-5,10-methenyltetrahydrofolate + H2O = (6R)-10-formyltetrahydrofolate + H(+). It functions in the pathway one-carbon metabolism; tetrahydrofolate interconversion. In terms of biological role, catalyzes the oxidation of 5,10-methylenetetrahydrofolate to 5,10-methenyltetrahydrofolate and then the hydrolysis of 5,10-methenyltetrahydrofolate to 10-formyltetrahydrofolate. This chain is Bifunctional protein FolD, found in Azorhizobium caulinodans (strain ATCC 43989 / DSM 5975 / JCM 20966 / LMG 6465 / NBRC 14845 / NCIMB 13405 / ORS 571).